The primary structure comprises 232 residues: Putative N-acetylmannosamine-6-phosphate 2-epimerase (232 aa).

This sequence belongs to the NanE family.

The enzyme catalyses an N-acyl-D-glucosamine 6-phosphate = an N-acyl-D-mannosamine 6-phosphate. It participates in amino-sugar metabolism; N-acetylneuraminate degradation; D-fructose 6-phosphate from N-acetylneuraminate: step 3/5. Functionally, converts N-acetylmannosamine-6-phosphate (ManNAc-6-P) to N-acetylglucosamine-6-phosphate (GlcNAc-6-P). The sequence is that of Putative N-acetylmannosamine-6-phosphate 2-epimerase from Synechococcus elongatus (strain ATCC 33912 / PCC 7942 / FACHB-805) (Anacystis nidulans R2).